A 226-amino-acid chain; its full sequence is Uracil-DNA glycosylase (226 aa).

D65 acts as the Proton acceptor in catalysis.

The protein belongs to the uracil-DNA glycosylase (UDG) superfamily. UNG family.

The protein resides in the cytoplasm. It catalyses the reaction Hydrolyzes single-stranded DNA or mismatched double-stranded DNA and polynucleotides, releasing free uracil.. Excises uracil residues from the DNA which can arise as a result of misincorporation of dUMP residues by DNA polymerase or due to deamination of cytosine. The protein is Uracil-DNA glycosylase of Enterococcus faecalis (strain ATCC 700802 / V583).